The sequence spans 182 residues: Ribosome maturation factor RimP (182 aa).

It belongs to the RimP family.

It is found in the cytoplasm. Required for maturation of 30S ribosomal subunits. This Chloroherpeton thalassium (strain ATCC 35110 / GB-78) protein is Ribosome maturation factor RimP.